Consider the following 1160-residue polypeptide: MFEWIKNLFGDPNERELNKLWPIVEEINDHYEELQDLTDDELRAKTDAFRAEIREAVADIEARQNEIREKLKRAPGLEGPVGGDGQVTEMEGEALSLDERDALYDEFDELEEEWQDVVEDTLWELLPEAFAVVKETCRRMLGETWMAGGSKIEWDMVPYDVQILGAIVLHQGRIAEMKTGEGKTLAAVMPLYLNALTGRGCQLVTVNDYLAERDTEWMGPIYEFHGLTVDCVNRYDPHTEGRKEAYEADITYGTNNEIGFDYLRDNSFVVRPEQLMQRGHHYAIIDEIDSVLIDEARTPLIISGPVPDQENDEYRELRDPVEQLVEAQRRLVRSFVKETRELLEEKEEAEEEGDSRRAQELEDEAGLSLFRASRGYPKNRQLQKLLNEPGMERLRQKTENFYLQENAKRMPFVDQELYFSVDEKKQTVEMTEKGQEYIAKIMDESEDLFVLPVVGDKIAEVEDEYQEKVDELEEALQEEDLSQEKRENKYMNDKRELEKELQETKREIYNTYSERAERVHAIEQLLKAFTLYERDTEYIVQEGKVQIVDEHTGRVMEGRRYSEGLHEALEAKEEVEIQNATQTYASVTLQNYFRMYDKLSGMTGTAETEAEEFNEIYDLDVVVVPTHEPVRRDDKDDLVFQTKREKYNAIVEKVKEYNKRGQPVLVGSASVEVSETISRTLEREGIPHNVLNAKQDRAKEEAQIVAEAGQKGSVTIATNMAGRGTDIQITDEVRELGGLAILGSERHESRRIDLQLRGRAGRQGDPGESQFYVSLEDDLMRLFGSDRVAKVMDSMGIEEGEVITHPWINKSIKRAQSKVEQNNFAIRKRQLEYDDVLNSQREVIYKRRREALTGERFHGQVLNMLYEYIEALVERHYGQGNIAGLREDLLRTLAFDLEMDREEFVQLGEDGVVDHVYDVATDYYRQKRANIAQPFHQTLRDLKQERGDDMIEQVFVDFTDGQDAIRAVADVDEALETNGEEINEALERTAMLQTIDEKWTDHLRELDELKEGIGLRSFGRKDPVVEYKMEAFDLFSDMMAEIGQEVVSLVFRAGPVVDDEVQTEGQGPRRRLSQRNAQTQHDSAQPDYSIDADGDGGGGQEGEAAERDPTVEEKQPVTVADEPGRNEYVTVRNNANGETTEMKWKYAKKKINQGGWSLVS.

ATP-binding positions include glutamine 162 and 180-184 (GEGKT). Residues 342–362 (LLEEKEEAEEEGDSRRAQELE) are disordered. Over residues 344–353 (EEKEEAEEEG) the composition is skewed to acidic residues. Aspartate 726 serves as a coordination point for ATP. A disordered region spans residues 1060–1134 (EVQTEGQGPR…RNEYVTVRNN (75 aa)). Over residues 1074 to 1083 (QRNAQTQHDS) the composition is skewed to polar residues. Residues 1104–1115 (AAERDPTVEEKQ) are compositionally biased toward basic and acidic residues.

The protein belongs to the SecA family. Monomer and homodimer. Part of the essential Sec protein translocation apparatus which comprises SecA, SecYEG and auxiliary proteins SecDF. Other proteins may also be involved.

The protein resides in the cell inner membrane. The protein localises to the cytoplasm. The catalysed reaction is ATP + H2O + cellular proteinSide 1 = ADP + phosphate + cellular proteinSide 2.. Its function is as follows. Part of the Sec protein translocase complex. Interacts with the SecYEG preprotein conducting channel. Has a central role in coupling the hydrolysis of ATP to the transfer of proteins into and across the cell membrane, serving as an ATP-driven molecular motor driving the stepwise translocation of polypeptide chains across the membrane. The chain is Protein translocase subunit SecA from Salinibacter ruber (strain DSM 13855 / M31).